We begin with the raw amino-acid sequence, 26 residues long: DEAD-box ATP-dependent RNA helicase 1 (26 aa).

Positions 1-10 match the Q motif motif; sequence RELLMGIFEK. Position 11–16 (11–16) interacts with ATP; that stretch reads NGTGKT. Positions 11 to 26 constitute a Helicase ATP-binding domain; that stretch reads NGTGKTAAFVIPLLQK.

It belongs to the DEAD box helicase family. DDX6/DHH1 subfamily.

It localises to the cytoplasm. The protein localises to the P-body. It catalyses the reaction ATP + H2O = ADP + phosphate + H(+). ATP-dependent RNA helicase involved in mRNA turnover, and more specifically in mRNA decapping. The polypeptide is DEAD-box ATP-dependent RNA helicase 1 (Catharanthus roseus (Madagascar periwinkle)).